The primary structure comprises 126 residues: Large ribosomal subunit protein bL19 (126 aa).

The protein belongs to the bacterial ribosomal protein bL19 family.

This protein is located at the 30S-50S ribosomal subunit interface and may play a role in the structure and function of the aminoacyl-tRNA binding site. This is Large ribosomal subunit protein bL19 from Nitrobacter winogradskyi (strain ATCC 25391 / DSM 10237 / CIP 104748 / NCIMB 11846 / Nb-255).